The primary structure comprises 727 residues: MTQAQHDAAPITTGTNQTASVFSFDVRPDKIGIITINVPGEKVNTLKAEFVDQFLNVFKQAQQSSGLKGLILISGKPDTFIAGADISMIAGCKTKEDARDLAEKGQKLFSQIANYPLPVVAAIHGACLGGGLELALACHWRVCSQDDKTRLGLPEVQLGLLPGSGGTQRLPRLIGVSSALDIMLTGKQLRAKQALRLGLVDDAVPLDILLDIAIEKVKKGIPVRKPLPWQQRLLVGPVGRYFLFNIVRKKTLAKTRGHYPAPERIIEVVKEGLEKGMSQGLRAEAVAFGELAMTRESAALRNLFFAATSLKNETGSSEKPAKIKHVGILGGGLMGGGIANVTATRGKLPVRIKDINEKGISQVLKYTWDLLSKRVKQKRLRPAERAQQMMLISGTTDYRGFAQTDIVVEAVFEDLSLKQKMVAEIETNAKPETIFASNTSSLPIHQIAEKAQRPEQVIGLHYFSPVDKMPLVEVIPHQGTSEKTIATAVSLAKKQGKTAIVVGDKAGFYVNRILVPYISEAAHCLVAGEPIDHIDGALVNFGFPVGPINLLDEVGIDVGTKIMPVLVEQLGPRFAAPESLDAVLKDGRKGRKNGRGFYLYAPGPRKFWQFGKRDKKVDSSVYTLLNITPESHMLSSEIAQRCVMLMLNEAVRCLDEGIIRSPRDGDIGAVFGIGFPPFFGGPFRYIDSLGCARVVEILRRLESQYGDRFVPCECLVNMAEQNKSFYP.

The segment at 16-205 (NQTASVFSFD…RLGLVDDAVP (190 aa)) is enoyl-CoA hydratase. Residues 321-727 (AKIKHVGILG…MAEQNKSFYP (407 aa)) are 3-hydroxyacyl-CoA dehydrogenase.

It in the N-terminal section; belongs to the enoyl-CoA hydratase/isomerase family. The protein in the central section; belongs to the 3-hydroxyacyl-CoA dehydrogenase family. As to quaternary structure, heterotetramer of two alpha chains (FadJ) and two beta chains (FadI).

It is found in the cytoplasm. The enzyme catalyses a (3S)-3-hydroxyacyl-CoA = a (2E)-enoyl-CoA + H2O. It carries out the reaction a 4-saturated-(3S)-3-hydroxyacyl-CoA = a (3E)-enoyl-CoA + H2O. It catalyses the reaction a (3S)-3-hydroxyacyl-CoA + NAD(+) = a 3-oxoacyl-CoA + NADH + H(+). The catalysed reaction is (3S)-3-hydroxybutanoyl-CoA = (3R)-3-hydroxybutanoyl-CoA. The protein operates within lipid metabolism; fatty acid beta-oxidation. Catalyzes the formation of a hydroxyacyl-CoA by addition of water on enoyl-CoA. Also exhibits 3-hydroxyacyl-CoA epimerase and 3-hydroxyacyl-CoA dehydrogenase activities. The chain is Fatty acid oxidation complex subunit alpha from Photorhabdus laumondii subsp. laumondii (strain DSM 15139 / CIP 105565 / TT01) (Photorhabdus luminescens subsp. laumondii).